A 90-amino-acid polypeptide reads, in one-letter code: Succinate dehydrogenase subunit 7, mitochondrial (90 aa).

Residues 1–41 (MAQPAFLSALRSRLRSPQPQAPALPHLQPPRRGFHVELGAR) constitute a mitochondrion transit peptide.

As to quaternary structure, component of complex II composed of eight subunits in plants: four classical SDH subunits SDH1, SDH2, SDH3 and SDH4 (a flavoprotein (FP), an iron-sulfur protein (IP), and a cytochrome b composed of a large and a small subunit.), as well as four subunits unknown in mitochondria from bacteria and heterotrophic eukaryotes.

Its subcellular location is the mitochondrion inner membrane. Its pathway is carbohydrate metabolism; tricarboxylic acid cycle. The chain is Succinate dehydrogenase subunit 7, mitochondrial from Oryza sativa subsp. japonica (Rice).